We begin with the raw amino-acid sequence, 388 residues long: Acetate kinase (388 aa).

Asn14 lines the Mg(2+) pocket. Lys21 provides a ligand contact to ATP. Residue Arg80 participates in substrate binding. Residue Asp137 is the Proton donor/acceptor of the active site. Residues 197 to 201, 271 to 273, and 319 to 323 contribute to the ATP site; these read HLGNG, DFR, and GIGEH. Position 373 (Glu373) interacts with Mg(2+).

Belongs to the acetokinase family. As to quaternary structure, homodimer. It depends on Mg(2+) as a cofactor. Requires Mn(2+) as cofactor.

Its subcellular location is the cytoplasm. The catalysed reaction is acetate + ATP = acetyl phosphate + ADP. The protein operates within metabolic intermediate biosynthesis; acetyl-CoA biosynthesis; acetyl-CoA from acetate: step 1/2. In terms of biological role, catalyzes the formation of acetyl phosphate from acetate and ATP. Can also catalyze the reverse reaction. This is Acetate kinase from Mycobacterium marinum (strain ATCC BAA-535 / M).